Consider the following 493-residue polypeptide: Cytochrome P450 2A9 (493 aa).

Heme is bound at residue Cys438.

The protein belongs to the cytochrome P450 family. Heme serves as cofactor. As to expression, liver.

It localises to the endoplasmic reticulum membrane. Its subcellular location is the microsome membrane. The enzyme catalyses an organic molecule + reduced [NADPH--hemoprotein reductase] + O2 = an alcohol + oxidized [NADPH--hemoprotein reductase] + H2O + H(+). Its function is as follows. Cytochromes P450 are a group of heme-thiolate monooxygenases. In liver microsomes, this enzyme is involved in an NADPH-dependent electron transport pathway. It oxidizes a variety of structurally unrelated compounds, including steroids, fatty acids, and xenobiotics. This Mesocricetus auratus (Golden hamster) protein is Cytochrome P450 2A9 (CYP2A9).